The following is a 77-amino-acid chain: UPF0401 protein c0279 (77 aa).

It belongs to the UPF0401 family.

The chain is UPF0401 protein c0279 from Escherichia coli O6:H1 (strain CFT073 / ATCC 700928 / UPEC).